The sequence spans 250 residues: Ribonuclease PH (250 aa).

Phosphate contacts are provided by residues Arg-87 and 125–127 (GTR).

Belongs to the RNase PH family. In terms of assembly, homohexameric ring arranged as a trimer of dimers.

It catalyses the reaction tRNA(n+1) + phosphate = tRNA(n) + a ribonucleoside 5'-diphosphate. Functionally, phosphorolytic 3'-5' exoribonuclease that plays an important role in tRNA 3'-end maturation. Removes nucleotide residues following the 3'-CCA terminus of tRNAs; can also add nucleotides to the ends of RNA molecules by using nucleoside diphosphates as substrates, but this may not be physiologically important. Probably plays a role in initiation of 16S rRNA degradation (leading to ribosome degradation) during starvation. This chain is Ribonuclease PH, found in Moorella thermoacetica (strain ATCC 39073 / JCM 9320).